We begin with the raw amino-acid sequence, 207 residues long: UPF0328 protein ECU02_1590/ECU04_0060/ECU08_2120 (207 aa).

Disordered regions lie at residues 1–154 and 180–207; these read MPRP…HSHT and GRLH…LATL. Basic and acidic residues-rich tracts occupy residues 14–24 and 75–97; these read DHPDFRSESSA and HTEG…ETES. Composition is skewed to polar residues over residues 98–121 and 133–149; these read PKPQ…SQNT and SRPS…QSPH.

It belongs to the UPF0328 family.

This chain is UPF0328 protein ECU02_1590/ECU04_0060/ECU08_2120, found in Encephalitozoon cuniculi (strain GB-M1) (Microsporidian parasite).